Reading from the N-terminus, the 278-residue chain is 2-(acetamidomethylene)succinate hydrolase (278 aa).

Residues I41 and 106 to 107 each bind chloride; that span reads SL. The Nucleophile role is filled by S106. Active-site residues include D130 and H258.

It belongs to the AB hydrolase superfamily. In terms of assembly, homodimer.

The catalysed reaction is 2-(acetamidomethylene)succinate + 2 H2O + H(+) = succinate semialdehyde + acetate + NH4(+) + CO2. It functions in the pathway cofactor degradation; B6 vitamer degradation. Catalyzes the final reaction in the degradation of vitamin B6 from (E)-2-(acetamidomethylene)succinate (E-2AMS) to produce succinic semialdehyde, acetate, ammonia and carbon dioxide. The protein is 2-(acetamidomethylene)succinate hydrolase of Mesorhizobium japonicum (strain LMG 29417 / CECT 9101 / MAFF 303099) (Mesorhizobium loti (strain MAFF 303099)).